Reading from the N-terminus, the 241-residue chain is MALNPLEQFKVYTIIELPRLFGYDVSFTNSSFFTMISVILMILFLLFGIKKGSVIPGYLQAAVEYVYDFVISIIENNTGSKGLQHIPLIFTVFIFILSCNLVGVLPYSFTVTSHVIVTFALSMVVFIYITIVGFKEREVEFLRILLPKGTPSWLAPIIIIIKLFAYLVRPVSLSIRLAANMIAGHTIIKVIAGFIVNMNIFFTPAPFLFIIALIGFEVFVAILQAYIFTILTCVYLSDAVK.

A run of 8 helical transmembrane segments spans residues 29–49 (NSSF…LFGI), 54–74 (VIPG…ISII), 86–106 (IPLI…GVLP), 114–134 (HVIV…IVGF), 153–173 (WLAP…PVSL), 177–197 (LAAN…FIVN), 200–220 (IFFT…EVFV), and 221–241 (AILQ…DAVK).

Belongs to the ATPase A chain family. In terms of assembly, F-type ATPases have 2 components, CF(1) - the catalytic core - and CF(0) - the membrane proton channel. CF(1) has five subunits: alpha(3), beta(3), gamma(1), delta(1), epsilon(1). CF(0) has three main subunits: a(1), b(2) and c(9-12). The alpha and beta chains form an alternating ring which encloses part of the gamma chain. CF(1) is attached to CF(0) by a central stalk formed by the gamma and epsilon chains, while a peripheral stalk is formed by the delta and b chains.

It is found in the cell membrane. In terms of biological role, key component of the proton channel; it plays a direct role in the translocation of protons across the membrane. The polypeptide is ATP synthase subunit a (Wolbachia pipientis wMel).